The chain runs to 314 residues: Olfactory receptor 5G29 (314 aa).

Residues 1–25 lie on the Extracellular side of the membrane; that stretch reads MEEKNQTIVMEFFFLGLTDHLYQKI. Asn-5 carries an N-linked (GlcNAc...) asparagine glycan. The chain crosses the membrane as a helical span at residues 26-46; that stretch reads ALFITILFVYLVTLGGNLGMI. Residues 47-54 are Cytoplasmic-facing; it reads TLIWADPR. Residues 55-75 form a helical membrane-spanning segment; sequence LHTPMYFFLSHLSFVDMCSSS. Residues 76-99 are Extracellular-facing; the sequence is SIAPKMLCDIFAEEKRISFMGCAA. A disulfide bridge links Cys-97 with Cys-189. Residues 100-120 form a helical membrane-spanning segment; the sequence is QMWFFGFFVGTECFLLASMAY. At 121 to 133 the chain is on the cytoplasmic side; that stretch reads DRYTAICKPLLYT. A helical membrane pass occupies residues 134-154; sequence LLMSQRVCVHLVVGPYVFAII. Over 155 to 196 the chain is Extracellular; it reads NITTHTTLAFCLPFCGSNTINHFFCDVSPLLSLACADSWVNK. A helical membrane pass occupies residues 197-217; sequence VVLFVLSGAIGVFSGLIIIVS. Topologically, residues 218–237 are cytoplasmic; that stretch reads YVSILMTIFKIQTADGKQKA. A helical transmembrane segment spans residues 238-258; the sequence is FSTCSSHLSAVSILYGTLFFI. The Extracellular segment spans residues 259–271; that stretch reads YVRPSASFSLNIN. The helical transmembrane segment at 272-292 threads the bilayer; that stretch reads KMISLFYTVVIPMLNPLIYSL. Residues 293-312 are Cytoplasmic-facing; the sequence is RNKEVKGAFRRKVQKKHFPA.

It belongs to the G-protein coupled receptor 1 family.

The protein resides in the cell membrane. Its function is as follows. Potential odorant receptor. The protein is Olfactory receptor 5G29 of Mus musculus (Mouse).